A 162-amino-acid chain; its full sequence is Phosphopantetheine adenylyltransferase (162 aa).

Position 11 (S11) interacts with substrate. Residues 11-12 (SF) and H19 each bind ATP. Substrate is bound by residues K43, V76, and R90. Residues 91-93 (GLR), E101, and 126-132 (HLYISSS) contribute to the ATP site.

The protein belongs to the bacterial CoaD family. As to quaternary structure, homohexamer. Requires Mg(2+) as cofactor.

The protein resides in the cytoplasm. The catalysed reaction is (R)-4'-phosphopantetheine + ATP + H(+) = 3'-dephospho-CoA + diphosphate. The protein operates within cofactor biosynthesis; coenzyme A biosynthesis; CoA from (R)-pantothenate: step 4/5. Its function is as follows. Reversibly transfers an adenylyl group from ATP to 4'-phosphopantetheine, yielding dephospho-CoA (dPCoA) and pyrophosphate. The polypeptide is Phosphopantetheine adenylyltransferase (Streptococcus pneumoniae (strain Taiwan19F-14)).